Reading from the N-terminus, the 387-residue chain is Protochlorophyllide reductase A, chloroplastic (387 aa).

A chloroplast-targeting transit peptide spans 1 to 35; it reads MALQVQAALLPSALSVPKKGNLSAVVKEPGFLSVS.

Belongs to the short-chain dehydrogenases/reductases (SDR) family. POR subfamily.

Its subcellular location is the plastid. The protein localises to the chloroplast. The catalysed reaction is chlorophyllide a + NADP(+) = protochlorophyllide a + NADPH + H(+). Its pathway is porphyrin-containing compound metabolism; chlorophyll biosynthesis. In terms of biological role, phototransformation of protochlorophyllide (Pchlide) to chlorophyllide (Chlide). The protein is Protochlorophyllide reductase A, chloroplastic (PORA) of Oryza sativa subsp. japonica (Rice).